Here is an 896-residue protein sequence, read N- to C-terminus: MLSTLIKKMFGSRNERTLRRMEKSVMAINAFEPKMQALSNEELAGKTQEFKERFNNGESLDELLAEAFATVREVSLRTLGLRHFDVQLIGGMVLHEGNIAEMRTGEGKTLVATLPAYLNAISGRGVHIVTVNDYLAKRDSQWMKPIYEFLGLTVGVIYPDMSHKEKQEAYKADIVYGTNNEYGFDYLRDNMAFSLTDKVQRELNFAIVDEVDSILIDEARTPLIISGAAEDSSELYIKINSLIPQLKKQEEEGDEGDYTIDEKQKQAHLTDAGHLHIEELLTKAKLLDPGESLYHASNIMLMHHVNAALKAHAMFHRDIDYIVKDNQVVIVDEHTGRTMPGRRWSEGLHQAVEAKEGVPIQNENQTLASITFQNFFRMYNKLSGMTGTADTEAYEFQQIYNLEVVVIPTNRSMIRKDEADLVYLTQADKFQAIIEDVRECGVRRQPVLVGTVSIEASEFLSQLLKKENIKHQVLNAKFHEKEAQIIAEAGRPGAVTIATNMAGRGTDIVLGGSLAADLANLPADASEQEKEAVKKEWQKRHDEVIAAGGLRIIGSERHESRRIDNQLRGRAGRQGDPGSSRFYLSLEDNLMRIFASERVASMMRRLGMQPGEPIEHSLVTRAIENAQRKLEGHHFDVRKQLLDYDNVANDQRQVIYTQRSSIMAMTDTQEVVEMMREEVMDSLVDTYIPPQSLEDQWDPQALSDVLSDEFKIKAPVPDWIDKDHSIQPEKIKEKILALAIEHYDEKVRKVGRPVISQFEKSIILQTLDNHWREHLAAMDQLRQGIHLRGYAQKDPKQEYKKEAFSLFTMMLDNLKYEVIRILSSVEIQTEEDAHVVEEQRRADQIRKMNLMHESLSENDEASETQTFRRQEKKIGRNDPCPCGSGKKYKACHGSLV.

ATP contacts are provided by residues glutamine 87, 105–109 (GEGKT), and aspartate 507. The interval 853–879 (ESLSENDEASETQTFRRQEKKIGRNDP) is disordered. The segment covering 866–876 (TFRRQEKKIGR) has biased composition (basic and acidic residues). 4 residues coordinate Zn(2+): cysteine 880, cysteine 882, cysteine 891, and histidine 892.

It belongs to the SecA family. As to quaternary structure, monomer and homodimer. Part of the essential Sec protein translocation apparatus which comprises SecA, SecYEG and auxiliary proteins SecDF-YajC and YidC. It depends on Zn(2+) as a cofactor.

It is found in the cell inner membrane. The protein resides in the cytoplasm. It carries out the reaction ATP + H2O + cellular proteinSide 1 = ADP + phosphate + cellular proteinSide 2.. Its function is as follows. Part of the Sec protein translocase complex. Interacts with the SecYEG preprotein conducting channel. Has a central role in coupling the hydrolysis of ATP to the transfer of proteins into and across the cell membrane, serving both as a receptor for the preprotein-SecB complex and as an ATP-driven molecular motor driving the stepwise translocation of polypeptide chains across the membrane. The sequence is that of Protein translocase subunit SecA from Legionella pneumophila subsp. pneumophila (strain Philadelphia 1 / ATCC 33152 / DSM 7513).